Here is a 243-residue protein sequence, read N- to C-terminus: Vimentin A2 (243 aa).

A coil 1B region spans residues 1-22 (GFSLQDELDFLKKLHDEELADV). One can recognise an IF rod domain in the interval 1 to 188 (GFSLQDELDF…KLLEGEESRI (188 aa)). Residues 23 to 45 (QAQIQDQQVQVDMDMAKPDLTAA) form a linker 12 region. Residues 46-184 (LRDVRLQYEN…ATYRKLLEGE (139 aa)) are coil 2. Positions 185-243 (ESRITTPLPNLSSFNLRDAILETKPILENTFSKKVLIKTIETRDGEVINESTQNHDDLE) are tail.

This sequence belongs to the intermediate filament family. In terms of assembly, homomer. Post-translationally, one of the most prominent phosphoproteins in various cells of mesenchymal origin. Phosphorylation is enhanced during cell division, at which time vimentin filaments are significantly reorganized. In terms of tissue distribution, expressed in low amounts in retina, optic nerve, and brain and in higher amounts in spinal cord.

Its function is as follows. Vimentins are class-III intermediate filaments found in various non-epithelial cells, especially mesenchymal cells. Vimentin is attached to the nucleus, endoplasmic reticulum, and mitochondria, either laterally or terminally. The chain is Vimentin A2 from Carassius auratus (Goldfish).